A 310-amino-acid polypeptide reads, in one-letter code: Probable deoxyhypusine synthase (310 aa).

Lys284 (nucleophile) is an active-site residue.

The protein belongs to the deoxyhypusine synthase family. NAD(+) is required as a cofactor.

It catalyses the reaction [eIF5A protein]-L-lysine + spermidine = [eIF5A protein]-deoxyhypusine + propane-1,3-diamine. It participates in protein modification; eIF5A hypusination. Catalyzes the NAD-dependent oxidative cleavage of spermidine and the subsequent transfer of the butylamine moiety of spermidine to the epsilon-amino group of a specific lysine residue of the eIF-5A precursor protein to form the intermediate deoxyhypusine residue. The chain is Probable deoxyhypusine synthase (dys) from Thermoplasma volcanium (strain ATCC 51530 / DSM 4299 / JCM 9571 / NBRC 15438 / GSS1).